Consider the following 490-residue polypeptide: Argininosuccinate lyase (490 aa).

Disordered stretches follow at residues 426–452 (DPES…LSAA) and 469–490 (ALAT…TAPE). The segment covering 440 to 452 (PAPESMAAALSAA) has biased composition (low complexity). Positions 469 to 480 (ALATAADERERV) are enriched in basic and acidic residues.

Belongs to the lyase 1 family. Argininosuccinate lyase subfamily.

It localises to the cytoplasm. The catalysed reaction is 2-(N(omega)-L-arginino)succinate = fumarate + L-arginine. It participates in amino-acid biosynthesis; L-arginine biosynthesis; L-arginine from L-ornithine and carbamoyl phosphate: step 3/3. This is Argininosuccinate lyase from Natronomonas pharaonis (strain ATCC 35678 / DSM 2160 / CIP 103997 / JCM 8858 / NBRC 14720 / NCIMB 2260 / Gabara) (Halobacterium pharaonis).